The sequence spans 223 residues: Ras-related protein Rab-21 (223 aa).

Residue Ala2 is modified to N-acetylalanine. Positions 26, 29, 30, 31, 32, 43, 44, 46, 48, and 49 each coordinate GTP. Thr31 contacts Mg(2+). A Switch 1 motif is present at residues 41-54; the sequence is KFNDKHITTLQASF. Mg(2+) contacts are provided by Thr49 and Asp72. The short motif at 74 to 92 is the Switch 2 element; it reads AGQERFHALGPIYYRDSNG. Residues Gly75, Asn130, Lys131, Asp133, Ala161, and Lys162 each contribute to the GTP site. 2 S-geranylgeranyl cysteine lipidation sites follow: Cys219 and Cys220. Cysteine methyl ester is present on Cys220. Positions 221 to 223 are cleaved as a propeptide — removed in mature form; sequence SSG.

This sequence belongs to the small GTPase superfamily. Rab family. As to quaternary structure, interacts with the cytoplasmic tail of integrins ITGA1, ITGA2, ITGA5, ITGA6, ITGA11 and ITGB1; this interaction is dependent upon its GDP/GTP cycle. Interacts with RABGEF1 (via VPS9 domain). Interacts with ANKRD27. Interacts (in GTP-bound form) with VAMP8 in response to starvation; the interaction probably regulates VAMP8 endolysosomal trafficking. Interacts (active GTP-bound form) with TMED10; the interaction is indirect and regulates TMED10 abundance and localization at the Golgi. Mg(2+) serves as cofactor.

It is found in the endoplasmic reticulum membrane. Its subcellular location is the golgi apparatus. The protein resides in the trans-Golgi network. It localises to the golgi apparatus membrane. The protein localises to the early endosome membrane. It is found in the cytoplasmic vesicle membrane. Its subcellular location is the cleavage furrow. The protein resides in the cell projection. It localises to the neuron projection. The enzyme catalyses GTP + H2O = GDP + phosphate + H(+). Regulated by guanine nucleotide exchange factors (GEFs) including ANKRD27 and RABGEF1, which promote the exchange of bound GDP for free GTP. Regulated by GTPase activating proteins (GAPs) which increase the GTP hydrolysis activity. Inhibited by GDP dissociation inhibitors (GDIs). In terms of biological role, the small GTPases Rab are key regulators of intracellular membrane trafficking, from the formation of transport vesicles to their fusion with membranes. Rabs cycle between an inactive GDP-bound form and an active GTP-bound form that is able to recruit to membranes different sets of downstream effectors directly responsible for vesicle formation, movement, tethering and fusion. RAB21 is involved in membrane trafficking control. Regulates integrin internalization and recycling, but does not influence the traffic of endosomally translocated receptors in general. As a result, may regulate cell adhesion and migration. During the mitosis of adherent cells, controls the endosomal trafficking of integrins which is required for the successful completion of cytokinesis. Involved in neurite growth. Following SBF2/MTMT13-mediated activation in response to starvation-induced autophagy, binds to and regulates SNARE protein VAMP8 endolysosomal transport required for SNARE-mediated autophagosome-lysosome fusion. Modulates protein levels of the cargo receptors TMED2 and TMED10, and required for appropriate Golgi localization of TMED10. This is Ras-related protein Rab-21 from Rattus norvegicus (Rat).